The primary structure comprises 99 residues: Indole-3-acetic acid-induced protein ARG2 (99 aa).

Residues 40-62 are disordered; sequence RGGASIGGNMVPKSGEEKVRGGE. Residues 53–62 are compositionally biased toward basic and acidic residues; sequence SGEEKVRGGE.

The sequence is that of Indole-3-acetic acid-induced protein ARG2 (ARG2) from Vigna radiata var. radiata (Mung bean).